Consider the following 272-residue polypeptide: MEALRLGFSPCPNDTFIFYALVHGRVESPVPLEPVLEDVETLNRWALEGRLPLTKLSYAAYAQVRDRYVALRSGGALGRGVGPLVVARGPLQALEGLRVAVPGRHTTAYFLLSLYAQGFVPVEVRYDRILPMVAQGEVEAGLIIHESRFTYPRYGLVQVVDLGAWWEERTGLPLPLGAILARRDLGEGLIRALDEAVRRSVAYALAHPEEALDYMRAHAQELSDEVIWAHVHTYVNAFSLDVGEEGERAVARLFAEAEARGLAAPSPRPLFV.

Residues 55-57 (KLS) and 107-108 (TA) each bind substrate. Catalysis depends on H145, which acts as the Proton acceptor.

The protein belongs to the MqnA/MqnD family. MqnD subfamily.

The enzyme catalyses cyclic dehypoxanthinylfutalosinate = 1,4-dihydroxy-6-naphthoate + dihydroxyacetone. Its pathway is quinol/quinone metabolism; menaquinone biosynthesis. In terms of biological role, catalyzes the conversion of cyclic dehypoxanthine futalosine (cyclic DHFL) into 1,4-dihydroxy-6-naphthoate, a step in the biosynthesis of menaquinone (MK, vitamin K2). The sequence is that of 1,4-dihydroxy-6-naphtoate synthase from Thermus thermophilus (strain ATCC 27634 / DSM 579 / HB8).